The sequence spans 220 residues: Ribonuclease HII (220 aa).

The RNase H type-2 domain maps to 27 to 220 (CIIVGVDEVG…SKISYMFKNS (194 aa)). A divalent metal cation contacts are provided by aspartate 33, glutamate 34, and aspartate 128.

Belongs to the RNase HII family. The cofactor is Mn(2+). Mg(2+) serves as cofactor.

It localises to the cytoplasm. It carries out the reaction Endonucleolytic cleavage to 5'-phosphomonoester.. Endonuclease that specifically degrades the RNA of RNA-DNA hybrids. This chain is Ribonuclease HII, found in Ehrlichia ruminantium (strain Gardel).